Consider the following 504-residue polypeptide: Cobyric acid synthase (504 aa).

Positions 251–448 constitute a GATase cobBQ-type domain; the sequence is DITIAIVQLP…LHGLFDSDAF (198 aa). The Nucleophile role is filled by C332. Residue H440 is part of the active site.

It belongs to the CobB/CobQ family. CobQ subfamily.

Its pathway is cofactor biosynthesis; adenosylcobalamin biosynthesis. In terms of biological role, catalyzes amidations at positions B, D, E, and G on adenosylcobyrinic A,C-diamide. NH(2) groups are provided by glutamine, and one molecule of ATP is hydrogenolyzed for each amidation. This Salmonella gallinarum (strain 287/91 / NCTC 13346) protein is Cobyric acid synthase.